A 417-amino-acid chain; its full sequence is MERPEPVVPPSWRERLRCFPWRNTAHTLRERFREDRLGVTASSLTFTTVLALVPFFTVALALFTAFPIFSRVQIVLERWLIDSLIPETIARQVLGYLTQFASKASQLGMAGFSILVITAVALILTIDRTLNNIWRVRQLRPLGQRVLIYWAAITLGPLVLGLSLVLSSYVMSASRGLVNALPEGLRFIFDSIEYLALAAGMAGLYHYVPNTAVRWRHAWVGGLFVATCMELAKKALGLYLASVPTYSVIYGTFATLPILLIWIYMAWIIVLLGAVVTAYLPIVMAGVQRMPGQQGWQFEMAVEILQYLEQERESPAKGLYASDLARRLHVDWQQIDPVLQALSVLDWVGTVQAPGVAAGSEGTEPRYMLLVDPQHTPLAPLVERLLLAPSAAVQPLWERTGLAGMTLASLLESRPRP.

The next 6 helical transmembrane spans lie at 49 to 69 (VLAL…FPIF), 106 to 126 (QLGM…ILTI), 146 to 166 (VLIY…SLVL), 187 to 207 (FIFD…LYHY), 235 to 255 (ALGL…TFAT), and 256 to 276 (LPIL…GAVV).

The protein belongs to the UPF0761 family.

The protein resides in the cell inner membrane. This is UPF0761 membrane protein Daci_4966 from Delftia acidovorans (strain DSM 14801 / SPH-1).